A 185-amino-acid polypeptide reads, in one-letter code: Ribosome-recycling factor (185 aa).

The tract at residues 141–161 is disordered; the sequence is KQEKDKKISEDDLKRAEKEVQ.

Belongs to the RRF family.

It localises to the cytoplasm. Its function is as follows. Responsible for the release of ribosomes from messenger RNA at the termination of protein biosynthesis. May increase the efficiency of translation by recycling ribosomes from one round of translation to another. This chain is Ribosome-recycling factor, found in Geotalea uraniireducens (strain Rf4) (Geobacter uraniireducens).